Reading from the N-terminus, the 1486-residue chain is Chromosome partition protein MukB (1486 aa).

34–41 serves as a coordination point for ATP; it reads GGNGAGKS. Coiled coils occupy residues 326–418, 444–480, and 509–603; these read LEAD…QYNQ, LETF…QAYQ, and RHLA…RAPV. The segment at 666-783 is flexible hinge; sequence PGGSEDQRLN…EVPLFGRAAR (118 aa). Coiled-coil stretches lie at residues 835 to 923, 977 to 1115, and 1209 to 1266; these read EAEI…AKLE, EMLS…TAKA, and VEAI…QNVS.

This sequence belongs to the SMC family. MukB subfamily. As to quaternary structure, homodimerization via its hinge domain. Binds to DNA via its C-terminal region. Interacts, and probably forms a ternary complex, with MukE and MukF via its C-terminal region. The complex formation is stimulated by calcium or magnesium. Interacts with tubulin-related protein FtsZ.

It is found in the cytoplasm. Its subcellular location is the nucleoid. In terms of biological role, plays a central role in chromosome condensation, segregation and cell cycle progression. Functions as a homodimer, which is essential for chromosome partition. Involved in negative DNA supercoiling in vivo, and by this means organize and compact chromosomes. May achieve or facilitate chromosome segregation by condensation DNA from both sides of a centrally located replisome during cell division. The chain is Chromosome partition protein MukB from Shigella boydii serotype 18 (strain CDC 3083-94 / BS512).